A 66-amino-acid polypeptide reads, in one-letter code: Nigrocin-2GRa (66 aa).

Positions 1 to 22 are cleaved as a signal peptide; it reads MFTLKKSQLLLFFPGTINLSLC. A propeptide spanning residues 23-45 is cleaved from the precursor; the sequence is QDETNAEEERRDEEVAKMEEIKR. Cysteines 60 and 66 form a disulfide.

As to expression, expressed by the skin glands.

It localises to the secreted. Functionally, antimicrobial peptide active at least against the Gram-positive bacterium S.aureus but with otherwise unclear activity spectrum. Lacks hemolytic activity against rabbit or human erythrocytes. This is Nigrocin-2GRa from Odorrana grahami (Yunnanfu frog).